The following is a 375-amino-acid chain: MSCPVIELTQQLIRRPSLSPDDAGCQALLIERLQAIGFTVERMDFADTQNFWAWRGQGETLAFAGHTDVVPPGDADRWINPPFEPTIRDGMLFGRGAADMKGSLAAMVVAAERFVAQHPNHTGRLAFLITSDEEASAHNGTVKVVEALMARNERLDYCLVGEPSSIEVVGDVVKNGRRGSLTCNLTIHGVQGHVAYPHLADNPVHRAAPFINELVAIEWDQGNEFFPATSMQIANIQAGTGSNNVIPGELFVQFNFRFSTELTDEMIKAQVLALLEKHQLRYTVDWWLSGQPFLTARGKLVDAVVNAVEHYNEIKPQLLTTGGTSDGRFIARMGAQVVELGPVNATIHKINECVNAADLQLLARMYQRIMEQLVA.

Position 66 (histidine 66) interacts with Zn(2+). Residue aspartate 68 is part of the active site. Aspartate 99 contributes to the Zn(2+) binding site. Glutamate 133 serves as the catalytic Proton acceptor. Zn(2+) contacts are provided by glutamate 134, glutamate 162, and histidine 348.

This sequence belongs to the peptidase M20A family. DapE subfamily. As to quaternary structure, homodimer. Requires Zn(2+) as cofactor. Co(2+) serves as cofactor.

The enzyme catalyses N-succinyl-(2S,6S)-2,6-diaminopimelate + H2O = (2S,6S)-2,6-diaminopimelate + succinate. The protein operates within amino-acid biosynthesis; L-lysine biosynthesis via DAP pathway; LL-2,6-diaminopimelate from (S)-tetrahydrodipicolinate (succinylase route): step 3/3. Its function is as follows. Catalyzes the hydrolysis of N-succinyl-L,L-diaminopimelic acid (SDAP), forming succinate and LL-2,6-diaminopimelate (DAP), an intermediate involved in the bacterial biosynthesis of lysine and meso-diaminopimelic acid, an essential component of bacterial cell walls. In Escherichia coli O1:K1 / APEC, this protein is Succinyl-diaminopimelate desuccinylase.